Consider the following 156-residue polypeptide: Cyanate hydratase (156 aa).

Residues R96, E99, and S122 contribute to the active site.

Belongs to the cyanase family.

It carries out the reaction cyanate + hydrogencarbonate + 3 H(+) = NH4(+) + 2 CO2. Catalyzes the reaction of cyanate with bicarbonate to produce ammonia and carbon dioxide. The polypeptide is Cyanate hydratase (Pseudomonas entomophila (strain L48)).